A 175-amino-acid chain; its full sequence is ATP-dependent protease subunit HslV (175 aa).

T2 is an active-site residue. Residues G157, C160, and T163 each coordinate Na(+).

Belongs to the peptidase T1B family. HslV subfamily. As to quaternary structure, a double ring-shaped homohexamer of HslV is capped on each side by a ring-shaped HslU homohexamer. The assembly of the HslU/HslV complex is dependent on binding of ATP.

It localises to the cytoplasm. The catalysed reaction is ATP-dependent cleavage of peptide bonds with broad specificity.. Its activity is regulated as follows. Allosterically activated by HslU binding. Protease subunit of a proteasome-like degradation complex believed to be a general protein degrading machinery. This chain is ATP-dependent protease subunit HslV, found in Photobacterium profundum (strain SS9).